The chain runs to 318 residues: Probable ABC transporter permease protein MG189 (318 aa).

Transmembrane regions (helical) follow at residues 42-62 (VLGF…VVSF), 98-118 (AIVV…FFTI), 134-154 (LVWF…LIGQ), 169-189 (PLIV…GFMY), 230-250 (VGIL…LLLG), and 282-302 (LKMS…FLFH). Residues 99–301 (IVVNTLVTVL…LPMFIIYFLF (203 aa)) form the ABC transmembrane type-1 domain.

The protein belongs to the binding-protein-dependent transport system permease family. MalFG subfamily.

It is found in the cell membrane. Functionally, probably part of a binding-protein-dependent transport system. Probably responsible for the translocation of the substrate across the membrane. The sequence is that of Probable ABC transporter permease protein MG189 from Mycoplasma genitalium (strain ATCC 33530 / DSM 19775 / NCTC 10195 / G37) (Mycoplasmoides genitalium).